A 161-amino-acid polypeptide reads, in one-letter code: Nucleotide-binding protein Bamb_2603 (161 aa).

It belongs to the YajQ family.

Nucleotide-binding protein. This Burkholderia ambifaria (strain ATCC BAA-244 / DSM 16087 / CCUG 44356 / LMG 19182 / AMMD) (Burkholderia cepacia (strain AMMD)) protein is Nucleotide-binding protein Bamb_2603.